Reading from the N-terminus, the 314-residue chain is Homoserine O-acetyltransferase (314 aa).

Cysteine 142 (acyl-thioester intermediate) is an active-site residue. Substrate is bound by residues lysine 163 and serine 192. Histidine 235 (proton acceptor) is an active-site residue. The active site involves glutamate 237. Arginine 249 contributes to the substrate binding site.

This sequence belongs to the MetA family.

The protein localises to the cytoplasm. The catalysed reaction is L-homoserine + acetyl-CoA = O-acetyl-L-homoserine + CoA. It participates in amino-acid biosynthesis; L-methionine biosynthesis via de novo pathway; O-acetyl-L-homoserine from L-homoserine: step 1/1. In terms of biological role, transfers an acetyl group from acetyl-CoA to L-homoserine, forming acetyl-L-homoserine. The protein is Homoserine O-acetyltransferase of Streptococcus pneumoniae (strain Taiwan19F-14).